Consider the following 311-residue polypeptide: MTTVSPRPRMARRALDGVLLLDKPVGLSSNDALMRAKRLYQAKKAGHTGTLDPLASGLLPLCFGEATKFSQDLLEADKTYEATMRLGVRTTTGDAEGDVLDTRDVSCDEAAVRAALARFVGEIVQVPPMYSALKRDGKPLYEYARAGQTVEREGRTVTIRALALVSCALPDVTFRVTCSKGTYVRTLAEDIGEALGCGAHLTMLRRTGVGPLTLEHAVTLDALDAATQDERDARLAPVDALLSTFPCVKLDAALATRFLHGQRLKLSELAARPDAAEGGRVRVYDADDRLLGVARASEGVLAPERLVVTGA.

The Nucleophile role is filled by aspartate 52.

Belongs to the pseudouridine synthase TruB family. Type 1 subfamily.

It catalyses the reaction uridine(55) in tRNA = pseudouridine(55) in tRNA. Functionally, responsible for synthesis of pseudouridine from uracil-55 in the psi GC loop of transfer RNAs. This chain is tRNA pseudouridine synthase B, found in Burkholderia mallei (strain ATCC 23344).